We begin with the raw amino-acid sequence, 347 residues long: Putative histone PARylation factor 1-like (347 aa).

Met1 is subject to N-acetylmethionine. N6-acetyllysine is present on residues Lys187 and Lys234.

The protein belongs to the HPF1 family.

The chain is Putative histone PARylation factor 1-like from Homo sapiens (Human).